Here is a 579-residue protein sequence, read N- to C-terminus: 2-isopropylmalate synthase (579 aa).

A Pyruvate carboxyltransferase domain is found at proline 40–aspartate 314. Residues aspartate 49, histidine 253, histidine 255, and asparagine 289 each coordinate Mg(2+). Residues serine 456–serine 579 form a regulatory domain region.

This sequence belongs to the alpha-IPM synthase/homocitrate synthase family. LeuA type 2 subfamily. As to quaternary structure, homodimer. Requires Mg(2+) as cofactor.

The protein localises to the cytoplasm. The enzyme catalyses 3-methyl-2-oxobutanoate + acetyl-CoA + H2O = (2S)-2-isopropylmalate + CoA + H(+). Its pathway is amino-acid biosynthesis; L-leucine biosynthesis; L-leucine from 3-methyl-2-oxobutanoate: step 1/4. In terms of biological role, catalyzes the condensation of the acetyl group of acetyl-CoA with 3-methyl-2-oxobutanoate (2-ketoisovalerate) to form 3-carboxy-3-hydroxy-4-methylpentanoate (2-isopropylmalate). The sequence is that of 2-isopropylmalate synthase from Pseudarthrobacter chlorophenolicus (strain ATCC 700700 / DSM 12829 / CIP 107037 / JCM 12360 / KCTC 9906 / NCIMB 13794 / A6) (Arthrobacter chlorophenolicus).